The sequence spans 730 residues: Elongation factor 2 (730 aa).

Residues 19–260 enclose the tr-type G domain; sequence QRIRNIGIVA…MVIHFLPNPL (242 aa). GTP is bound by residues 28–35, 94–98, and 148–151; these read AHIDHGKT, DTPGH, and NKVD. The residue at position 596 (histidine 596) is a Diphthamide.

It belongs to the TRAFAC class translation factor GTPase superfamily. Classic translation factor GTPase family. EF-G/EF-2 subfamily.

The protein localises to the cytoplasm. Catalyzes the GTP-dependent ribosomal translocation step during translation elongation. During this step, the ribosome changes from the pre-translocational (PRE) to the post-translocational (POST) state as the newly formed A-site-bound peptidyl-tRNA and P-site-bound deacylated tRNA move to the P and E sites, respectively. Catalyzes the coordinated movement of the two tRNA molecules, the mRNA and conformational changes in the ribosome. The protein is Elongation factor 2 of Methanosarcina mazei (strain ATCC BAA-159 / DSM 3647 / Goe1 / Go1 / JCM 11833 / OCM 88) (Methanosarcina frisia).